The sequence spans 481 residues: Rho GTPase-activating protein 15 (481 aa).

Residues S51, S111, S204, S207, and S249 each carry the phosphoserine modification. A PH domain is found at 87–197; the sequence is MVEKEGYLQK…WFQAIKNAID (111 aa). One can recognise a Rho-GAP domain in the interval 287–476; the sequence is SHLHTVCERE…FMLTEYDKIF (190 aa).

The protein localises to the cytoplasm. It localises to the membrane. In terms of biological role, GTPase activator for the Rho-type GTPases by converting them to an inactive GDP-bound state. Has activity toward RAC1. Overexpression results in an increase in actin stress fibers and cell contraction. The polypeptide is Rho GTPase-activating protein 15 (Arhgap15) (Mus musculus (Mouse)).